The following is a 366-amino-acid chain: 3-dehydroquinate synthase (366 aa).

NAD(+)-binding positions include 74 to 79 (SGEAAK), 108 to 112 (GVVGD), 132 to 133 (TT), K144, K153, and 171 to 174 (FLRT). Zn(2+)-binding residues include E186, H249, and H266.

This sequence belongs to the sugar phosphate cyclases superfamily. Dehydroquinate synthase family. The cofactor is Co(2+). Requires Zn(2+) as cofactor. It depends on NAD(+) as a cofactor.

The protein resides in the cytoplasm. The catalysed reaction is 7-phospho-2-dehydro-3-deoxy-D-arabino-heptonate = 3-dehydroquinate + phosphate. It participates in metabolic intermediate biosynthesis; chorismate biosynthesis; chorismate from D-erythrose 4-phosphate and phosphoenolpyruvate: step 2/7. Functionally, catalyzes the conversion of 3-deoxy-D-arabino-heptulosonate 7-phosphate (DAHP) to dehydroquinate (DHQ). The polypeptide is 3-dehydroquinate synthase (Geobacillus kaustophilus (strain HTA426)).